The following is a 207-amino-acid chain: Urease accessory protein UreG (207 aa).

14–21 (GPVGSGKT) contacts GTP.

It belongs to the SIMIBI class G3E GTPase family. UreG subfamily. Homodimer. UreD, UreF and UreG form a complex that acts as a GTP-hydrolysis-dependent molecular chaperone, activating the urease apoprotein by helping to assemble the nickel containing metallocenter of UreC. The UreE protein probably delivers the nickel.

The protein localises to the cytoplasm. Facilitates the functional incorporation of the urease nickel metallocenter. This process requires GTP hydrolysis, probably effectuated by UreG. This Pseudomonas entomophila (strain L48) protein is Urease accessory protein UreG.